We begin with the raw amino-acid sequence, 626 residues long: tRNA uridine 5-carboxymethylaminomethyl modification enzyme MnmG (626 aa).

Residue 13-18 coordinates FAD; it reads GGGHAG. 273 to 287 contributes to the NAD(+) binding site; that stretch reads GPRYCPSIEDKIHRF.

This sequence belongs to the MnmG family. In terms of assembly, homodimer. Heterotetramer of two MnmE and two MnmG subunits. FAD serves as cofactor.

The protein localises to the cytoplasm. In terms of biological role, NAD-binding protein involved in the addition of a carboxymethylaminomethyl (cmnm) group at the wobble position (U34) of certain tRNAs, forming tRNA-cmnm(5)s(2)U34. The chain is tRNA uridine 5-carboxymethylaminomethyl modification enzyme MnmG from Acinetobacter baumannii (strain AB307-0294).